Here is a 75-residue protein sequence, read N- to C-terminus: UPF0270 protein Avin_35000 (75 aa).

Belongs to the UPF0270 family.

This Azotobacter vinelandii (strain DJ / ATCC BAA-1303) protein is UPF0270 protein Avin_35000.